We begin with the raw amino-acid sequence, 325 residues long: UPF0285 protein MMP0642 (325 aa).

Belongs to the UPF0285 family.

The polypeptide is UPF0285 protein MMP0642 (Methanococcus maripaludis (strain DSM 14266 / JCM 13030 / NBRC 101832 / S2 / LL)).